The sequence spans 237 residues: N-alpha-acetyltransferase 40 (237 aa).

Glycine 2 carries the N-myristoyl glycine lipid modification. Positions 63–216 constitute an N-acetyltransferase domain; it reads SGLEPATVDW…EDCSYEILSR (154 aa). Substrate is bound by residues tyrosine 85, 127 to 129, and tyrosine 138; that span reads DVE. Residues 140-142 and 148-153 contribute to the acetyl-CoA site; these read VQL and RKGLGK. A substrate-binding site is contributed by threonine 174. Asparagine 179 contributes to the acetyl-CoA binding site. Substrate-binding residues include serine 197 and tyrosine 211.

The protein belongs to the acetyltransferase family. NAA40 subfamily.

The protein resides in the cytoplasm. The protein localises to the nucleus. The enzyme catalyses N-terminal L-seryl-[histone H4] + acetyl-CoA = N-terminal N(alpha)-acetyl-L-seryl-[histone H4] + CoA + H(+). The catalysed reaction is N-terminal L-seryl-[histone H2A] + acetyl-CoA = N-terminal N(alpha)-acetyl-L-seryl-[histone H2A] + CoA + H(+). Its function is as follows. N-alpha-acetyltransferase that specifically mediates the acetylation of the N-terminal residues of histones H4 and H2A. In contrast to other N-alpha-acetyltransferase, has a very specific selectivity for histones H4 and H2A N-terminus and specifically recognizes the 'Ser-Gly-Arg-Gly sequence'. Acts as a negative regulator of apoptosis. May play a role in hepatic lipid metabolism. The sequence is that of N-alpha-acetyltransferase 40 from Mus musculus (Mouse).